Consider the following 65-residue polypeptide: Potassium channel toxin alpha-KTx 12.6 (65 aa).

The first 22 residues, 1–22 (MKMKIFIITIVIALFITSIVEA), serve as a signal peptide directing secretion. Disulfide bonds link C30/C51, C36/C56, and C40/C58.

This sequence belongs to the short scorpion toxin superfamily. Potassium channel inhibitor family. Alpha-KTx 12 subfamily. In terms of tissue distribution, expressed by the venom gland.

It localises to the secreted. Its function is as follows. Inhibits voltage-gated potassium channels. In Lychas mucronatus (Chinese swimming scorpion), this protein is Potassium channel toxin alpha-KTx 12.6.